Here is a 192-residue protein sequence, read N- to C-terminus: MKDFFLFLGKFFKHGTAIASLAPSSPWLSRTTVRNIPWENARVVVELGAGTGPITKVIADRVHPDCRVIVLERDPDFARLLRERFANRANFDVVEGDVRDLTQILQQRGIEQADFVVSGLPVPSFPKELQRDLFRVVKQVLAPSGTFNQITEMPWVYQRFYRRFFDEVTFVFEPRNLPPAGAYFCRGVKESF.

It belongs to the methyltransferase superfamily.

The catalysed reaction is an N(2)-[(3R)-3-(2-saturated-acyloxy)acyl]-L-ornithine lipid + 3 S-adenosyl-L-methionine = an N,N,N-trimethylornithine lipid + 3 S-adenosyl-L-homocysteine + 3 H(+). In terms of biological role, catalyzes the 3-fold methylation of ornithine lipids. Forms ornithine lipids that are mono-, di-, and trimethylated on the delta-nitrogen of the ornithine head group. The polypeptide is Ornithine lipid N-methyltransferase (Singulisphaera acidiphila (strain ATCC BAA-1392 / DSM 18658 / VKM B-2454 / MOB10)).